We begin with the raw amino-acid sequence, 284 residues long: 2-dehydro-3-deoxyphosphooctonate aldolase (284 aa).

The protein belongs to the KdsA family.

Its subcellular location is the cytoplasm. It catalyses the reaction D-arabinose 5-phosphate + phosphoenolpyruvate + H2O = 3-deoxy-alpha-D-manno-2-octulosonate-8-phosphate + phosphate. It functions in the pathway carbohydrate biosynthesis; 3-deoxy-D-manno-octulosonate biosynthesis; 3-deoxy-D-manno-octulosonate from D-ribulose 5-phosphate: step 2/3. The protein operates within bacterial outer membrane biogenesis; lipopolysaccharide biosynthesis. This is 2-dehydro-3-deoxyphosphooctonate aldolase from Pectobacterium carotovorum subsp. carotovorum (strain PC1).